Consider the following 374-residue polypeptide: bZIP transcription factor TRAB1 (374 aa).

Over residues 1–13 the composition is skewed to basic and acidic residues; it reads MDLKDGGGSERRG. 2 disordered regions span residues 1–23 and 117–142; these read MDLKDGGGSERRGAAAGAGAGAA and ASPGAAAADGGGGGGEQQQPRRQPTL. Low complexity predominate over residues 14 to 23; the sequence is AAAGAGAGAA. A bZIP domain is found at 286–349; that stretch reads VERRQRRMIK…KNFFPEMQKN (64 aa). The interval 288-307 is basic motif; the sequence is RRQRRMIKNRESAARSRARK. A leucine-zipper region spans residues 314–335; that stretch reads LEAEVQKLKEQNMELQKKQEEI.

This sequence belongs to the bZIP family. Interacts with VP1 (via N-terminus). In terms of tissue distribution, expressed in roots, leaves and embryos.

The protein localises to the nucleus. Functionally, transcription activator that mediates abscisic acid (ABA) signaling. Binds specifically to the ABA-responsive element (ABRE) of the EMP1 and RAB16A gene promoters. This is bZIP transcription factor TRAB1 from Oryza sativa subsp. japonica (Rice).